We begin with the raw amino-acid sequence, 439 residues long: Methylenetetrahydrofolate--tRNA-(uracil-5-)-methyltransferase TrmFO (439 aa).

Residue 7–12 (GAGLAG) coordinates FAD.

The protein belongs to the MnmG family. TrmFO subfamily. The cofactor is FAD.

The protein resides in the cytoplasm. The enzyme catalyses uridine(54) in tRNA + (6R)-5,10-methylene-5,6,7,8-tetrahydrofolate + NADH + H(+) = 5-methyluridine(54) in tRNA + (6S)-5,6,7,8-tetrahydrofolate + NAD(+). It carries out the reaction uridine(54) in tRNA + (6R)-5,10-methylene-5,6,7,8-tetrahydrofolate + NADPH + H(+) = 5-methyluridine(54) in tRNA + (6S)-5,6,7,8-tetrahydrofolate + NADP(+). Its function is as follows. Catalyzes the folate-dependent formation of 5-methyl-uridine at position 54 (M-5-U54) in all tRNAs. The sequence is that of Methylenetetrahydrofolate--tRNA-(uracil-5-)-methyltransferase TrmFO from Heliobacterium modesticaldum (strain ATCC 51547 / Ice1).